The sequence spans 411 residues: Fructose-1,6-bisphosphatase, chloroplastic (411 aa).

A chloroplast-targeting transit peptide spans 1–53; that stretch reads MAATAGATPSSHLLLSSSRHVAASPQPRILFPSLSGKRVAVGKNHHATGVRCM. The Mg(2+) site is built by Glu133, Glu162, Asp183, Leu185, and Asp186. Position 186-189 (186-189) interacts with substrate; the sequence is DGSS. An intrachain disulfide couples Cys227 to Cys232. 5 residues coordinate substrate: Asn291, Tyr323, Tyr341, Tyr343, and Lys353. Glu359 contacts Mg(2+).

This sequence belongs to the FBPase class 1 family. Homotetramer. Requires Mg(2+) as cofactor.

It is found in the plastid. The protein localises to the chloroplast stroma. The enzyme catalyses beta-D-fructose 1,6-bisphosphate + H2O = beta-D-fructose 6-phosphate + phosphate. It participates in carbohydrate biosynthesis; Calvin cycle. The polypeptide is Fructose-1,6-bisphosphatase, chloroplastic (FBP) (Brassica napus (Rape)).